The sequence spans 1230 residues: ATP-dependent helicase/nuclease subunit A (1230 aa).

The UvrD-like helicase ATP-binding domain maps to 9-480 (STWTDDQWKA…IDLNKNFRSR (472 aa)). Residue 30-37 (AAAGSGKT) participates in ATP binding. Residues 507–796 (QAELKLGASY…RLMTIHSSKG (290 aa)) enclose the UvrD-like helicase C-terminal domain.

This sequence belongs to the helicase family. AddA subfamily. In terms of assembly, heterodimer of AddA and AddB/RexB. The cofactor is Mg(2+).

It carries out the reaction Couples ATP hydrolysis with the unwinding of duplex DNA by translocating in the 3'-5' direction.. It catalyses the reaction ATP + H2O = ADP + phosphate + H(+). The heterodimer acts as both an ATP-dependent DNA helicase and an ATP-dependent, dual-direction single-stranded exonuclease. Recognizes the chi site generating a DNA molecule suitable for the initiation of homologous recombination. The AddA nuclease domain is required for chi fragment generation; this subunit has the helicase and 3' -&gt; 5' nuclease activities. The protein is ATP-dependent helicase/nuclease subunit A of Bacillus licheniformis (strain ATCC 14580 / DSM 13 / JCM 2505 / CCUG 7422 / NBRC 12200 / NCIMB 9375 / NCTC 10341 / NRRL NRS-1264 / Gibson 46).